Consider the following 187-residue polypeptide: UPF0340 protein str1894 (187 aa).

This sequence belongs to the UPF0340 family.

This is UPF0340 protein str1894 from Streptococcus thermophilus (strain CNRZ 1066).